The chain runs to 665 residues: Long chain acyl-CoA synthetase 3 (665 aa).

228-239 (IMYTSGTTGDPK) is a binding site for ATP. Residues 495–519 (DGWLHTGDVGEWQPDGAMKIIDRKK) are fatty acid-binding.

Belongs to the ATP-dependent AMP-binding enzyme family. Requires Mg(2+) as cofactor.

It carries out the reaction a long-chain fatty acid + ATP + CoA = a long-chain fatty acyl-CoA + AMP + diphosphate. Its pathway is lipid metabolism; fatty acid metabolism. Functionally, activation of long-chain fatty acids for both synthesis of cellular lipids, and degradation via beta-oxidation. Preferentially uses palmitate, palmitoleate, oleate and linoleate. The protein is Long chain acyl-CoA synthetase 3 (LACS3) of Arabidopsis thaliana (Mouse-ear cress).